Here is a 95-residue protein sequence, read N- to C-terminus: Secreted RxLR effector protein 20 (95 aa).

Residues 1 to 20 form the signal peptide; the sequence is MQSPYIILFALVTLLGSISG. The short motif at 47 to 50 is the RxLR element; that stretch reads RLLR.

Belongs to the RxLR effector family.

The protein localises to the secreted. It is found in the host nucleus. It localises to the host cytoplasm. Functionally, secreted effector that partially suppresses the host cell death induced by cell death-inducing proteins. The sequence is that of Secreted RxLR effector protein 20 from Plasmopara viticola (Downy mildew of grapevine).